The chain runs to 232 residues: 5'-methylthioadenosine/S-adenosylhomocysteine nucleosidase (232 aa).

Catalysis depends on E12, which acts as the Proton acceptor. Substrate contacts are provided by residues G78, I152, and M173–E174. The Proton donor role is filled by D197.

This sequence belongs to the PNP/UDP phosphorylase family. MtnN subfamily. Homodimer.

The enzyme catalyses S-adenosyl-L-homocysteine + H2O = S-(5-deoxy-D-ribos-5-yl)-L-homocysteine + adenine. It carries out the reaction S-methyl-5'-thioadenosine + H2O = 5-(methylsulfanyl)-D-ribose + adenine. It catalyses the reaction 5'-deoxyadenosine + H2O = 5-deoxy-D-ribose + adenine. It functions in the pathway amino-acid biosynthesis; L-methionine biosynthesis via salvage pathway; S-methyl-5-thio-alpha-D-ribose 1-phosphate from S-methyl-5'-thioadenosine (hydrolase route): step 1/2. Functionally, catalyzes the irreversible cleavage of the glycosidic bond in both 5'-methylthioadenosine (MTA) and S-adenosylhomocysteine (SAH/AdoHcy) to adenine and the corresponding thioribose, 5'-methylthioribose and S-ribosylhomocysteine, respectively. Also cleaves 5'-deoxyadenosine, a toxic by-product of radical S-adenosylmethionine (SAM) enzymes, into 5-deoxyribose and adenine. Thus, is required for in vivo function of the radical SAM enzymes biotin synthase and lipoic acid synthase, that are inhibited by 5'-deoxyadenosine accumulation. The chain is 5'-methylthioadenosine/S-adenosylhomocysteine nucleosidase from Escherichia coli O7:K1 (strain IAI39 / ExPEC).